Consider the following 256-residue polypeptide: Alcohol dehydrogenase (256 aa).

12–35 (FVAGLGGIGLDTSKELVKRDLKNL) contacts NAD(+). Ser140 contributes to the substrate binding site. Tyr153 serves as the catalytic Proton acceptor.

It belongs to the short-chain dehydrogenases/reductases (SDR) family. As to quaternary structure, homodimer.

The enzyme catalyses a primary alcohol + NAD(+) = an aldehyde + NADH + H(+). The catalysed reaction is a secondary alcohol + NAD(+) = a ketone + NADH + H(+). The protein is Alcohol dehydrogenase (Adh) of Drosophila yakuba (Fruit fly).